Here is a 233-residue protein sequence, read N- to C-terminus: Ribonuclease 3 (233 aa).

Residues 4-126 form the RNase III domain; the sequence is LNKLMERLGH…IVGAIYIDAG (123 aa). Glu39 is a Mg(2+) binding site. Asp43 is a catalytic residue. Asp112 and Glu115 together coordinate Mg(2+). The active site involves Glu115. The 70-residue stretch at 153 to 222 folds into the DRBM domain; sequence DAKSLLQEWL…AKRFLELLDD (70 aa).

The protein belongs to the ribonuclease III family. As to quaternary structure, homodimer. Mg(2+) serves as cofactor.

The protein localises to the cytoplasm. It catalyses the reaction Endonucleolytic cleavage to 5'-phosphomonoester.. Its function is as follows. Digests double-stranded RNA. Involved in the processing of primary rRNA transcript to yield the immediate precursors to the large and small rRNAs (23S and 16S). Processes some mRNAs, and tRNAs when they are encoded in the rRNA operon. Processes pre-crRNA and tracrRNA of type II CRISPR loci if present in the organism. The protein is Ribonuclease 3 of Coxiella burnetii (strain RSA 331 / Henzerling II).